The following is a 286-amino-acid chain: L-cysteine S-thiosulfotransferase subunit SoxA (286 aa).

A signal peptide spans 1 to 27 (MKKTIQRGLFTGALVLMTAMTAKPANA). Cysteine 106 and cysteine 137 are disulfide-bonded. Residues 180–286 (DAYMKGKKFF…LKYNGPASRK (107 aa)) form the Cytochrome c domain. The heme site is built by cysteine 200 and histidine 204. Residue arginine 243 coordinates substrate. Cysteine 247 serves as a coordination point for heme. Residue cysteine 247 is the Cysteine persulfide intermediate of the active site.

Belongs to the SoxA family. Heterodimer of SoxA and SoxX. The SoxAX complex interacts with CT1020, SoxAX-binding protein SaxB (SoxK); this interaction seems to be between SoxA and CT1020 and stimulates catalytic activity of the SoxAX complex. Requires heme as cofactor. Post-translationally, cysteine persulfide at Cys-247.

The protein localises to the periplasm. It catalyses the reaction L-cysteinyl-[SoxY protein] + thiosulfate + 2 Fe(III)-[cytochrome c] = S-sulfosulfanyl-L-cysteinyl-[SoxY protein] + 2 Fe(II)-[cytochrome c] + 2 H(+). The enzyme catalyses S-sulfanyl-L-cysteinyl-[SoxY protein] + thiosulfate + 2 Fe(III)-[cytochrome c] = S-(2-sulfodisulfanyl)-L-cysteinyl-[SoxY protein] + 2 Fe(II)-[cytochrome c] + 2 H(+). Functionally, C-type monoheme cytochrome, which is part of the SoxAX cytochrome complex involved in sulfur oxidation. The SoxAX complex catalyzes the formation of a heterodisulfide bond between the conserved cysteine residue on a sulfur carrier SoxYZ complex subunit SoxY and thiosulfate or other inorganic sulfur substrates. This leads to the liberation of two electrons, which may be transferred from the SoxAX complex to another cytochrome c and which then may be used for reductive CO(2) fixation. This chain is L-cysteine S-thiosulfotransferase subunit SoxA, found in Chlorobaculum tepidum (strain ATCC 49652 / DSM 12025 / NBRC 103806 / TLS) (Chlorobium tepidum).